The following is a 169-amino-acid chain: Putative antitoxin Rv0268c (169 aa).

Over residues 1 to 11 (MGTRSKSRTRQ) the composition is skewed to basic residues. Residues 1–35 (MGTRSKSRTRQLKQSNGCTATTSGASDRRRRARRR) are disordered. Positions 120 to 153 (AAILISAERYESLMEELEDLRDRLSVHEREHVTM) form a coiled coil.

It belongs to the phD/YefM antitoxin family.

Its function is as follows. Putative antitoxin component of a type II toxin-antitoxin (TA) system; however the expected toxin coding sequence is not found adjacent to this gene. The sequence is that of Putative antitoxin Rv0268c from Mycobacterium tuberculosis (strain ATCC 25618 / H37Rv).